The following is a 473-amino-acid chain: Endoglucanase B (473 aa).

The first 17 residues, 1–17, serve as a signal peptide directing secretion; that stretch reads MKFLNTFSLLSLAIIGS. The segment at 18–367 is catalytic; the sequence is KAMKNISSKE…GLIKGLGNSI (350 aa). Residue Glu-173 is the Proton donor of the active site. Glu-295 serves as the catalytic Nucleophile. The interval 365-387 is linker; that stretch reads NSIKTRTTIRRTTTTTTSQSQPT. CBM10 domains follow at residues 391 to 427 and 436 to 473; these read SCFSVNLGYSCCNGCEVEYTDSDGEWGVENGNWCGIK and ICWSEKLGYPCCQNTSSVVYTDNDGKWGVENGNWCGIY.

This sequence belongs to the glycosyl hydrolase 5 (cellulase A) family.

It catalyses the reaction Endohydrolysis of (1-&gt;4)-beta-D-glucosidic linkages in cellulose, lichenin and cereal beta-D-glucans.. Its function is as follows. Rate of hydrolysis of cellulo-oligosaccharides increased with increasing chain length from cellotriose to cellopentaose. The protein is Endoglucanase B (CELB) of Neocallimastix patriciarum (Rumen fungus).